The following is a 575-amino-acid chain: Acetylcholine receptor subunit beta-type acr-2 (575 aa).

Residues 1 to 20 (MKKTVKILLILITVFLKVHC) form the signal peptide. At 21-270 (NGGHDDEAAD…IRRKTLFYTV (250 aa)) the chain is on the extracellular side. Residues 31 to 57 (FLSHTNIDDPNNSSDPNKNSDQGDTMG) form a disordered region. The segment covering 38-50 (DDPNNSSDPNKNS) has biased composition (low complexity). Residues asparagine 41, asparagine 42, asparagine 80, and asparagine 131 are each glycosylated (N-linked (GlcNAc...) asparagine). Residues cysteine 185 and cysteine 199 are joined by a disulfide bond. 3 helical membrane passes run 271–291 (ILII…YLPV), 299–319 (LTIS…KILP), and 331–351 (LLLA…IVNI). The Cytoplasmic portion of the chain corresponds to 352–527 (YFRSALSHKM…WKYVAMVLDR (176 aa)). A helical membrane pass occupies residues 528–548 (LILLIFFGVTLGGTLGIICSA).

This sequence belongs to the ligand-gated ion channel (TC 1.A.9) family. Acetylcholine receptor (TC 1.A.9.1) subfamily. As to quaternary structure, component of nicotinic acetylcholine receptor. In cholinergic motoneurons, composed of 2 non-alpha subunits acr-2 and acr-3, and 3 alpha subunits unc-38, unc-63 and acr-12. Specifically expressed in cholinergic ventral cord motoneurons of the VA, VB, DA and DB classes but not AS and VC classes. Expressed in PVQ and DVC neurons in the tail.

It is found in the postsynaptic cell membrane. The protein localises to the cell membrane. Its function is as follows. Non-alpha subunit of nicotinic acetylcholine receptor (nAChR). Acts in cholinergic motoneurons to regulate presynaptic neurotransmitter release, thereby ensuring normal level of excitation of cholinergic motoneurons during locomotion. The sequence is that of Acetylcholine receptor subunit beta-type acr-2 (acr-2) from Caenorhabditis elegans.